Consider the following 395-residue polypeptide: Protein BUR2 (395 aa).

2 disordered regions span residues 1–31 (MSAT…ASSG) and 372–395 (AKQE…KPKI). Ser-24 carries the post-translational modification Phosphoserine.

Belongs to the BUR kinase complex composed of SGV1/BUR1 and BUR2. Interacts with SGV1.

The protein resides in the nucleus. Component of the BUR kinase complex involved in transcription regulation. This complex phosphorylates 'Ser-120' of the UBC2/RAD6 ubiquitin-conjugating enzyme (E2), leading to monoubiquitination of histone H2B, the localization of the PAF1 complex to the chromatin, and the silencing of telomeric-associated genes. Also required for histone H3 'Lys-4' trimethylation. May phosphorylate the 'Ser-5' of the RBP1 carboxy-terminal domain (CTD) repeats. Necessary for the recovery from pheromone-induced growth arrest in the cell cycle G1 phase. Also required for vegetative growth itself. The kinase activity of the complex requires the presence of BUR2. Overexpression of BUR2 interferes with mitotic chromosome segregation. The sequence is that of Protein BUR2 (BUR2) from Saccharomyces cerevisiae (strain ATCC 204508 / S288c) (Baker's yeast).